The chain runs to 462 residues: MWDLKSEWWAVGFGLLLLLAASAQAGGLAPHHYTPDWPSLDSRPLPRWFDEAKFGLFVHWGVYSVPAWGSEWFWWHWQGEQSSAYVRFMKENYPPGFSYADFAPQFTARFFHPEEWADLFQAAGAKYVVLTAKHHEGFTNWPSAVSWNWNSKDVGPHRDLVGELGAAVRKRNIRYGLYHSLFEWFHPLYLLDKKNGLKTQHFVSTKTMPELYDLVNRYKPDLIWSDGEWECPDSYWNSTEFLAWLYNESPVKDQVVVNDRWGQNCSCRHGGYYNCEDKYRPHSLPDHKWEMCTSVDKASWGYRRDMSMSTIVDENEIIEELVQTISLGGNYLLNIGPNKDGVIVPIFQERLLAVGKWLQINGEAIYASKPWRVQSERNKTVVWYTTKDSAVYATFLHWPEDGVVNLQSPKMTSATKITMLGMEGELHWTQDPLEGVLITLPQLPPGTFPVESAWTLKLTKVN.

The signal sequence occupies residues 1-28; sequence MWDLKSEWWAVGFGLLLLLAASAQAGGL. N-linked (GlcNAc...) asparagine glycosylation is found at asparagine 237, asparagine 264, and asparagine 378.

It belongs to the glycosyl hydrolase 29 family. Homotetramer.

It is found in the lysosome. The catalysed reaction is an alpha-L-fucoside + H2O = L-fucose + an alcohol. It carries out the reaction a neolactoside IV(2)-alpha-Fuc-nLc4Cer(d18:1(4E)) + H2O = a neolactoside nLc4Cer(d18:1(4E)) + L-fucose. It catalyses the reaction a neolactoside IV(2)-alpha-Fuc-nLc4Cer(d18:0) + H2O = a neolactoside nLc4Cer(d18:0) + L-fucose. Functionally, alpha-L-fucosidase is responsible for hydrolyzing the alpha-1,6-linked fucose joined to the reducing-end N-acetylglucosamine of the carbohydrate moieties of glycoproteins. This chain is Tissue alpha-L-fucosidase (Fuca1), found in Rattus norvegicus (Rat).